Here is a 486-residue protein sequence, read N- to C-terminus: Malonate-semialdehyde dehydrogenase (486 aa).

NAD(+)-binding residues include Phe-154, Lys-178, Glu-181, Arg-182, and Ser-231. Catalysis depends on Cys-286, which acts as the Nucleophile. Residue Glu-386 coordinates NAD(+).

The protein belongs to the aldehyde dehydrogenase family. IolA subfamily. As to quaternary structure, homotetramer.

The enzyme catalyses 3-oxopropanoate + NAD(+) + CoA + H2O = hydrogencarbonate + acetyl-CoA + NADH + H(+). It carries out the reaction 2-methyl-3-oxopropanoate + NAD(+) + CoA + H2O = propanoyl-CoA + hydrogencarbonate + NADH + H(+). It participates in polyol metabolism; myo-inositol degradation into acetyl-CoA; acetyl-CoA from myo-inositol: step 7/7. In terms of biological role, catalyzes the oxidation of malonate semialdehyde (MSA) and methylmalonate semialdehyde (MMSA) into acetyl-CoA and propanoyl-CoA, respectively. Is involved in a myo-inositol catabolic pathway. Bicarbonate, and not CO2, is the end-product of the enzymatic reaction. This Bacillus pumilus (strain SAFR-032) protein is Malonate-semialdehyde dehydrogenase.